The primary structure comprises 490 residues: Tandem C2 domains nuclear protein (490 aa).

A phosphoserine mark is found at Ser83, Ser156, Ser168, Ser174, and Ser211. The tract at residues 189-215 (HDSLSSVPSSSSSRKNSQGSNRSLDTI) is disordered. Residues 192–211 (LSSVPSSSSSRKNSQGSNRS) show a composition bias toward low complexity. 2 positions are modified to phosphothreonine: Thr214 and Thr216. Position 218 is a phosphoserine (Ser218). C2 domains follow at residues 223 to 342 (DFGR…SLDI) and 344 to 471 (PPSK…NQWK). The Nuclear localization signal motif lies at 447 to 449 (RRK).

The protein localises to the nucleus. This Homo sapiens (Human) protein is Tandem C2 domains nuclear protein (TC2N).